Here is a 160-residue protein sequence, read N- to C-terminus: 2-C-methyl-D-erythritol 2,4-cyclodiphosphate synthase (160 aa).

A divalent metal cation-binding residues include Asp-12 and His-14. 4-CDP-2-C-methyl-D-erythritol 2-phosphate is bound by residues 12-14 (DVH) and 38-39 (HS). Residue His-46 participates in a divalent metal cation binding. 4-CDP-2-C-methyl-D-erythritol 2-phosphate-binding positions include 60 to 62 (DIG), 65 to 69 (FPDTD), 136 to 139 (TTTE), Phe-143, and Arg-146.

The protein belongs to the IspF family. In terms of assembly, homotrimer. A divalent metal cation is required as a cofactor.

It carries out the reaction 4-CDP-2-C-methyl-D-erythritol 2-phosphate = 2-C-methyl-D-erythritol 2,4-cyclic diphosphate + CMP. Its pathway is isoprenoid biosynthesis; isopentenyl diphosphate biosynthesis via DXP pathway; isopentenyl diphosphate from 1-deoxy-D-xylulose 5-phosphate: step 4/6. Involved in the biosynthesis of isopentenyl diphosphate (IPP) and dimethylallyl diphosphate (DMAPP), two major building blocks of isoprenoid compounds. Catalyzes the conversion of 4-diphosphocytidyl-2-C-methyl-D-erythritol 2-phosphate (CDP-ME2P) to 2-C-methyl-D-erythritol 2,4-cyclodiphosphate (ME-CPP) with a corresponding release of cytidine 5-monophosphate (CMP). The protein is 2-C-methyl-D-erythritol 2,4-cyclodiphosphate synthase of Acinetobacter baumannii (strain SDF).